The chain runs to 134 residues: Holo-[acyl-carrier-protein] synthase (134 aa).

2 residues coordinate Mg(2+): D8 and E56.

The protein belongs to the P-Pant transferase superfamily. AcpS family. Mg(2+) serves as cofactor.

It localises to the cytoplasm. The catalysed reaction is apo-[ACP] + CoA = holo-[ACP] + adenosine 3',5'-bisphosphate + H(+). In terms of biological role, transfers the 4'-phosphopantetheine moiety from coenzyme A to a Ser of acyl-carrier-protein. The protein is Holo-[acyl-carrier-protein] synthase of Clostridium kluyveri (strain ATCC 8527 / DSM 555 / NBRC 12016 / NCIMB 10680 / K1).